Consider the following 387-residue polypeptide: Probable tRNA sulfurtransferase (387 aa).

Residues 67-167 form the THUMP domain; it reads SLLKNLFTRL…KEHFLIISES (101 aa). Residues 185 to 186, 210 to 211, Arg-269, Gly-287, and Gln-296 contribute to the ATP site; these read LL and TF.

The protein belongs to the ThiI family.

Its subcellular location is the cytoplasm. It catalyses the reaction [ThiI sulfur-carrier protein]-S-sulfanyl-L-cysteine + a uridine in tRNA + 2 reduced [2Fe-2S]-[ferredoxin] + ATP + H(+) = [ThiI sulfur-carrier protein]-L-cysteine + a 4-thiouridine in tRNA + 2 oxidized [2Fe-2S]-[ferredoxin] + AMP + diphosphate. The catalysed reaction is [ThiS sulfur-carrier protein]-C-terminal Gly-Gly-AMP + S-sulfanyl-L-cysteinyl-[cysteine desulfurase] + AH2 = [ThiS sulfur-carrier protein]-C-terminal-Gly-aminoethanethioate + L-cysteinyl-[cysteine desulfurase] + A + AMP + 2 H(+). It functions in the pathway cofactor biosynthesis; thiamine diphosphate biosynthesis. In terms of biological role, catalyzes the ATP-dependent transfer of a sulfur to tRNA to produce 4-thiouridine in position 8 of tRNAs, which functions as a near-UV photosensor. Also catalyzes the transfer of sulfur to the sulfur carrier protein ThiS, forming ThiS-thiocarboxylate. This is a step in the synthesis of thiazole, in the thiamine biosynthesis pathway. The sulfur is donated as persulfide by IscS. The polypeptide is Probable tRNA sulfurtransferase (Mycoplasma pneumoniae (strain ATCC 29342 / M129 / Subtype 1) (Mycoplasmoides pneumoniae)).